The primary structure comprises 248 residues: UDP-2,3-diacylglucosamine hydrolase (248 aa).

Mn(2+)-binding residues include Asp7, His9, Asp40, Asn78, and His113. 78–79 provides a ligand contact to substrate; it reads NR. Substrate is bound by residues Asp121, Ser159, Thr163, Lys166, and His194. Mn(2+) contacts are provided by His194 and His196.

Belongs to the LpxH family. Mn(2+) is required as a cofactor.

The protein localises to the cell inner membrane. It carries out the reaction UDP-2-N,3-O-bis[(3R)-3-hydroxytetradecanoyl]-alpha-D-glucosamine + H2O = 2-N,3-O-bis[(3R)-3-hydroxytetradecanoyl]-alpha-D-glucosaminyl 1-phosphate + UMP + 2 H(+). It participates in glycolipid biosynthesis; lipid IV(A) biosynthesis; lipid IV(A) from (3R)-3-hydroxytetradecanoyl-[acyl-carrier-protein] and UDP-N-acetyl-alpha-D-glucosamine: step 4/6. In terms of biological role, hydrolyzes the pyrophosphate bond of UDP-2,3-diacylglucosamine to yield 2,3-diacylglucosamine 1-phosphate (lipid X) and UMP by catalyzing the attack of water at the alpha-P atom. Involved in the biosynthesis of lipid A, a phosphorylated glycolipid that anchors the lipopolysaccharide to the outer membrane of the cell. This chain is UDP-2,3-diacylglucosamine hydrolase, found in Pseudomonas fluorescens (strain Pf0-1).